We begin with the raw amino-acid sequence, 256 residues long: Type III pantothenate kinase (256 aa).

ATP is bound at residue 6 to 13 (DVGNTNTV). Residues Tyr-100 and 107–110 (GADR) each bind substrate. Residue Asp-109 is the Proton acceptor of the active site. Asp-129 contributes to the K(+) binding site. Residue Thr-132 coordinates ATP. Residue Thr-184 coordinates substrate.

The protein belongs to the type III pantothenate kinase family. In terms of assembly, homodimer. The cofactor is NH4(+). Requires K(+) as cofactor.

It is found in the cytoplasm. It catalyses the reaction (R)-pantothenate + ATP = (R)-4'-phosphopantothenate + ADP + H(+). The protein operates within cofactor biosynthesis; coenzyme A biosynthesis; CoA from (R)-pantothenate: step 1/5. Catalyzes the phosphorylation of pantothenate (Pan), the first step in CoA biosynthesis. This chain is Type III pantothenate kinase, found in Myxococcus xanthus (strain DK1622).